The sequence spans 74 residues: uncharacterized protein (74 aa).

A disordered region spans residues 55–74 (DENSESESKDGASWFKVYRG).

This is an uncharacterized protein from Listeria innocua serovar 6a (strain ATCC BAA-680 / CLIP 11262).